The following is a 314-amino-acid chain: Formimidoylglutamase (314 aa).

Residues His127, Asp153, His155, Asp157, Asp245, and Asp247 each coordinate Mn(2+).

This sequence belongs to the arginase family. Requires Mn(2+) as cofactor.

The enzyme catalyses N-formimidoyl-L-glutamate + H2O = formamide + L-glutamate. It functions in the pathway amino-acid degradation; L-histidine degradation into L-glutamate; L-glutamate from N-formimidoyl-L-glutamate (hydrolase route): step 1/1. Catalyzes the conversion of N-formimidoyl-L-glutamate to L-glutamate and formamide. The polypeptide is Formimidoylglutamase (Aeromonas salmonicida (strain A449)).